The following is a 227-amino-acid chain: Orotidine 5'-phosphate decarboxylase (227 aa).

Substrate-binding positions include Asp8, Lys30, 58 to 67 (DLKLYDIPNT), Thr117, Arg177, Gln186, Gly206, and Arg207. Lys60 acts as the Proton donor in catalysis.

The protein belongs to the OMP decarboxylase family. Type 1 subfamily. In terms of assembly, homodimer.

It carries out the reaction orotidine 5'-phosphate + H(+) = UMP + CO2. Its pathway is pyrimidine metabolism; UMP biosynthesis via de novo pathway; UMP from orotate: step 2/2. In terms of biological role, catalyzes the decarboxylation of orotidine 5'-monophosphate (OMP) to uridine 5'-monophosphate (UMP). The chain is Orotidine 5'-phosphate decarboxylase from Campylobacter lari (strain RM2100 / D67 / ATCC BAA-1060).